The chain runs to 385 residues: Podocin (385 aa).

The segment covering 1–27 (MDSRARSSSREAHGRSSRSSSRDDKKA) has biased composition (basic and acidic residues). The tract at residues 1–64 (MDSRARSSSR…GEPRAPAATA (64 aa)) is disordered. The Cytoplasmic portion of the chain corresponds to 1-104 (MDSRARSSSR…IKPSGLGACE (104 aa)). Cysteine 103 carries the S-palmitoyl cysteine lipid modification. Residues 105–125 (WLLVLASLIFIIMTFPFSIWF) form a helical membrane-spanning segment. Topologically, residues 126–385 (CIKVVQEYER…NPKKKDSPML (260 aa)) are extracellular. Over residues 357-370 (NRAQGSINYPSSSK) the composition is skewed to polar residues. The disordered stretch occupies residues 357–385 (NRAQGSINYPSSSKPVEPLNPKKKDSPML). A compositionally biased stretch (basic and acidic residues) spans 376 to 385 (NPKKKDSPML).

The protein belongs to the band 7/mec-2 family. Interacts with nephrin/NPHS1, KIRRL1 and CD2AP. Interacts with DDN.

It is found in the membrane. In terms of biological role, plays a role in the regulation of glomerular permeability, acting probably as a linker between the plasma membrane and the cytoskeleton. This chain is Podocin (Nphs2), found in Mus musculus (Mouse).